Reading from the N-terminus, the 197-residue chain is Potassium-transporting ATPase KdpC subunit (197 aa).

The helical transmembrane segment at 7–27 (PALVSMGLFTVLLGLAYPLAV) threads the bilayer.

The protein belongs to the KdpC family. In terms of assembly, the system is composed of three essential subunits: KdpA, KdpB and KdpC.

It is found in the cell inner membrane. Functionally, part of the high-affinity ATP-driven potassium transport (or Kdp) system, which catalyzes the hydrolysis of ATP coupled with the electrogenic transport of potassium into the cytoplasm. This subunit acts as a catalytic chaperone that increases the ATP-binding affinity of the ATP-hydrolyzing subunit KdpB by the formation of a transient KdpB/KdpC/ATP ternary complex. The sequence is that of Potassium-transporting ATPase KdpC subunit from Caulobacter vibrioides (strain ATCC 19089 / CIP 103742 / CB 15) (Caulobacter crescentus).